A 1368-amino-acid polypeptide reads, in one-letter code: Beclin-1-like protein A (1368 aa).

Low complexity-rich tracts occupy residues 24-57 (GSGSGSNNNNNNNNNNNNINNNNNPNNNPNNNGP) and 122-135 (NSIIENSNNSSPSN). 5 disordered regions span residues 24-64 (GSGS…PSSE), 122-249 (NSII…SLMM), 331-431 (NKNN…STNS), 819-874 (TITP…NNNN), and 992-1048 (IDGN…NDNN). The span at 136-147 (AITRNNSFNMDP) shows a compositional bias: polar residues. Residues 148–167 (NNNNNNNNNNNNNNNNNNNN) show a composition bias toward low complexity. A compositionally biased stretch (polar residues) spans 168–177 (GEYMNSSIVF). Residues 179 to 246 (NNVNNNNNNP…INNSVNSVNS (68 aa)) are compositionally biased toward low complexity. 2 stretches are compositionally biased toward low complexity: residues 992–1005 (IDGNENKINGNDNN) and 1015–1048 (NNNNNNNNNNNNNNNNNIYNNNNIEDYNNNNDNN). Positions 1047–1150 (NNYNFENEIN…AIRDQLERVS (104 aa)) form a coiled coil.

It belongs to the beclin family.

The protein resides in the endosome membrane. Functionally, involved in autophagy. May be required to recruit the atg8-phosphatidylinositol conjugate and the atg12-atg5 conjugate to the pre-autophagosomal structure. Required for normal survival when exposed to pathogenic bacteria S.typhimurium by promoting autophagic degradation of intracellular S.typhimurium. In Dictyostelium discoideum (Social amoeba), this protein is Beclin-1-like protein A (atg6A).